The following is a 443-amino-acid chain: Deoxyguanosinetriphosphate triphosphohydrolase-like protein (443 aa).

An HD domain is found at 66–259 (RLTHSLEAAQ…MELADDIAYG (194 aa)).

It belongs to the dGTPase family. Type 2 subfamily.

The sequence is that of Deoxyguanosinetriphosphate triphosphohydrolase-like protein from Vibrio vulnificus (strain CMCP6).